The primary structure comprises 83 residues: NAD(P)H-quinone oxidoreductase subunit L (83 aa).

The next 2 membrane-spanning stretches (helical) occupy residues 15–35 and 53–73; these read LLVL…VPLA and LGIY…APFL.

Belongs to the complex I NdhL subunit family. In terms of assembly, NDH-1 can be composed of about 15 different subunits; different subcomplexes with different compositions have been identified which probably have different functions.

It localises to the cellular thylakoid membrane. It catalyses the reaction a plastoquinone + NADH + (n+1) H(+)(in) = a plastoquinol + NAD(+) + n H(+)(out). It carries out the reaction a plastoquinone + NADPH + (n+1) H(+)(in) = a plastoquinol + NADP(+) + n H(+)(out). In terms of biological role, NDH-1 shuttles electrons from an unknown electron donor, via FMN and iron-sulfur (Fe-S) centers, to quinones in the respiratory and/or the photosynthetic chain. The immediate electron acceptor for the enzyme in this species is believed to be plastoquinone. Couples the redox reaction to proton translocation, and thus conserves the redox energy in a proton gradient. Cyanobacterial NDH-1 also plays a role in inorganic carbon-concentration. This chain is NAD(P)H-quinone oxidoreductase subunit L, found in Synechococcus sp. (strain CC9605).